Here is a 140-residue protein sequence, read N- to C-terminus: Vacuolar protein sorting-associated protein 55 homolog (140 aa).

The Cytoplasmic portion of the chain corresponds to 1–16 (MADVPGYLRTCLDMGK). A helical transmembrane segment spans residues 17–37 (IAFLAILVSTGIVLQILACAL). At 38–40 (FNN) the chain is on the lumenal side. A helical transmembrane segment spans residues 41–61 (WWPMLSVIMYVLLPMPLLFFG). At 62–75 (GSDSTSLFNESDNS) the chain is on the cytoplasmic side. A helical membrane pass occupies residues 76-98 (WINAAKFLTGASAVGSVAIPSIL). The Lumenal portion of the chain corresponds to 99–108 (KHAGLIGWGA). Residues 109 to 129 (LALDLSSYVVFLVAILGYICI) traverse the membrane as a helical segment. The Cytoplasmic segment spans residues 130–140 (GDASDNYYSYI).

The protein belongs to the OB-RGRP/VPS55 family.

Its subcellular location is the endosome membrane. In terms of biological role, involved in endosomal protein transport. The protein is Vacuolar protein sorting-associated protein 55 homolog of Arabidopsis thaliana (Mouse-ear cress).